A 637-amino-acid polypeptide reads, in one-letter code: Serine/threonine-protein kinase Nek11 (637 aa).

One can recognise a Protein kinase domain in the interval 29–287; the sequence is YVLQQKLGSG…AIEILKIPYI (259 aa). Residues 35 to 43 and K61 contribute to the ATP site; that span reads LGSGSFGTV. The active-site Proton acceptor is the D158. S273 bears the Phosphoserine; by CHEK1 mark. The stretch at 302–385 forms a coiled coil; the sequence is TLEDKNLDCQ…QELRSRNFQQ (84 aa). Positions 399-446 are disordered; that stretch reads GMEEKEEQPEGRPSCSPQDEDEERWQDREEEFDEPTLENLSEPQPIPS. Residues 416–434 show a composition bias toward acidic residues; that stretch reads QDEDEERWQDREEEFDEPT.

Belongs to the protein kinase superfamily. NEK Ser/Thr protein kinase family. NIMA subfamily. Interacts with NEK2. The cofactor is Mn(2+). Requires Mg(2+) as cofactor. Phosphorylated by NEK2. Phosphorylation at Ser-273 is important for its activation.

Its subcellular location is the nucleus. The protein localises to the nucleolus. It catalyses the reaction L-seryl-[protein] + ATP = O-phospho-L-seryl-[protein] + ADP + H(+). It carries out the reaction L-threonyl-[protein] + ATP = O-phospho-L-threonyl-[protein] + ADP + H(+). With respect to regulation, autorepressed by intramolecular binding of the C-terminus which dissociates following phosphorylation by NEK2. Activated in response to DNA damage. Inhibited by zinc. Its function is as follows. Protein kinase which plays an important role in the G2/M checkpoint response to DNA damage. Controls degradation of CDC25A by directly phosphorylating it on residues whose phosphorylation is required for BTRC-mediated polyubiquitination and degradation. In Macaca fascicularis (Crab-eating macaque), this protein is Serine/threonine-protein kinase Nek11 (NEK11).